A 505-amino-acid chain; its full sequence is 2,3-bisphosphoglycerate-independent phosphoglycerate mutase (505 aa).

2 residues coordinate Mn(2+): Asp-11 and Ser-61. Ser-61 functions as the Phosphoserine intermediate in the catalytic mechanism. Residues His-122, 152 to 153, Arg-183, Arg-189, 259 to 262, and Lys-332 contribute to the substrate site; these read RD and RTDR. Residues Asp-399, His-403, Asp-440, His-441, and His-458 each contribute to the Mn(2+) site.

This sequence belongs to the BPG-independent phosphoglycerate mutase family. Monomer. Requires Mn(2+) as cofactor.

The enzyme catalyses (2R)-2-phosphoglycerate = (2R)-3-phosphoglycerate. The protein operates within carbohydrate degradation; glycolysis; pyruvate from D-glyceraldehyde 3-phosphate: step 3/5. Its function is as follows. Catalyzes the interconversion of 2-phosphoglycerate and 3-phosphoglycerate. In Flavobacterium psychrophilum (strain ATCC 49511 / DSM 21280 / CIP 103535 / JIP02/86), this protein is 2,3-bisphosphoglycerate-independent phosphoglycerate mutase.